Consider the following 125-residue polypeptide: Small ribosomal subunit protein uS12c (125 aa).

This sequence belongs to the universal ribosomal protein uS12 family. As to quaternary structure, part of the 30S ribosomal subunit.

Its subcellular location is the plastid. It localises to the chloroplast. With S4 and S5 plays an important role in translational accuracy. Located at the interface of the 30S and 50S subunits. The polypeptide is Small ribosomal subunit protein uS12c (rps12) (Oltmannsiellopsis viridis (Marine flagellate)).